The chain runs to 1094 residues: Potassium-transporting ATPase alpha chain 2 (1094 aa).

Positions 1–21 (MAGGAHRADRATGEERKEGGG) are enriched in basic and acidic residues. Residues 1 to 37 (MAGGAHRADRATGEERKEGGGRWRAPHSPSPPGPRGC) are disordered. Pro residues predominate over residues 28–37 (SPSPPGPRGC). Residues 56–157 (RYCTLLLFQR…NALTPPKQTP (102 aa)) lie on the Cytoplasmic side of the membrane. The helical transmembrane segment at 158 to 178 (EIIKFLKQMVGGFSILLWVGA) threads the bilayer. Over 179–201 (VLCWIAFGIQYVSNPSASLDRVY) the chain is Lumenal. The helical transmembrane segment at 202–222 (LGTVLAVVVILTGIFAYYQEA) threads the bilayer. Topologically, residues 223 to 358 (KSTNIMASFC…NEKTPIAIEI (136 aa)) are cytoplasmic. Residues 286-305 (SSLTGESEPQSRSSGFTHEN) form a disordered region. Residues 359 to 378 (EHFVHIVAGVAVSVGILFFI) traverse the membrane as a helical segment. Topologically, residues 379–390 (IAVCMKYHVLDA) are lumenal. The helical transmembrane segment at 391-408 (IIFLIAIIVANVPEGLLA) threads the bilayer. Residues 409–842 (TVTVALSLTA…EEGRLIFDNL (434 aa)) lie on the Cytoplasmic side of the membrane. D446 functions as the 4-aspartylphosphate intermediate in the catalytic mechanism. Positions 787 and 791 each coordinate Mg(2+). The chain crosses the membrane as a helical span at residues 843–862 (KKTIAYTLTKNIAELCPFLI). The Lumenal segment spans residues 863–872 (YIILGLPLPI). The helical transmembrane segment at 873 to 893 (GTITLLFIDLGTDIIPSIALA) threads the bilayer. Topologically, residues 894–913 (YEKAESDIMNRKPRHKKKDR) are cytoplasmic. Residues 914–936 (LVNQQLAVYSYLHIGLMQALGAF) form a helical membrane-spanning segment. Topologically, residues 937–988 (LVYFTVYAQQGFRPTSLFHLRIAWDSDHLNDLEDNYGQEWTSYQRQYLEWTG) are lumenal. A helical membrane pass occupies residues 989–1008 (YTAFFVGIMVQQIADLIIRK). Topologically, residues 1009–1022 (TRKNSIFKQGLFRN) are cytoplasmic. S1013 bears the Phosphoserine; by PKA mark. The chain crosses the membrane as a helical span at residues 1023 to 1041 (KVIWVGIASQIIVALLLSY). The Lumenal segment spans residues 1042–1056 (GLGSITALNFTMLKA). A helical transmembrane segment spans residues 1057 to 1077 (QYWFVAVPHAILIWVYDEMRK). Topologically, residues 1078-1094 (LFIRLYPGSWWDKNMYY) are cytoplasmic.

The protein belongs to the cation transport ATPase (P-type) (TC 3.A.3) family. Type IIC subfamily. In terms of assembly, the X(+)/K(+) ATPase pump is composed of a catalytic alpha subunit and an auxiliary non-catalytic beta subunit. The alpha subunit pairs with the beta subunit of gastric H(+)/K(+) ATPase ATP4B or the beta subunit of Na(+)/K(+) ATPases ATP1B1 and ATP1B3; this interaction is required for the formation of a functionally active pump and its targeting at the plasma membrane. As to expression, found in the skin, kidney, distal colon and brain. In the kidney it is found in the connecting tubule, cortical collecting duct and outer medullary collecting duct while in the brain it is specific to choroid plexus and cortex.

It localises to the apical cell membrane. It carries out the reaction K(+)(out) + ATP + H2O + H(+)(in) = K(+)(in) + ADP + phosphate + 2 H(+)(out). The catalysed reaction is K(+)(out) + Na(+)(in) + ATP + H2O = K(+)(in) + Na(+)(out) + ADP + phosphate + H(+). The catalytic subunit of a H(+)/K(+) ATPase and/or Na(+)/K(+) ATPase pump which transports K(+) ions in exchange for Na(+) and/or H(+) ions across the apical membrane of epithelial cells. Uses ATP as an energy source to pump K(+) ions into the cell while transporting Na(+) and/or H(+) ions to the extracellular compartment. Involved in the maintenance of electrolyte homeostasis through K(+) ion absorption in kidney and colon. In the airway epithelium, may play a primary role in mucus acidification regulating its viscosity and clearance. The protein is Potassium-transporting ATPase alpha chain 2 (ATP12A) of Oryctolagus cuniculus (Rabbit).